The chain runs to 189 residues: Putative manganese efflux pump MntP (189 aa).

Transmembrane regions (helical) follow at residues 3–23 (PVSLIFLAFAMSTDAFAAAIG), 41–61 (IIFGVIEAITPLVGWLLGQAA), 65–85 (VADWDHWIAFVLLVLLGLHMI), 106–128 (WILAVTALATSIDALAVGVGLAF), 141–161 (GLATMTMVTLGTMLGRALGAV), and 168–188 (MVGGVVLILVGATILYEHLSA).

This sequence belongs to the MntP (TC 9.B.29) family.

It localises to the cell inner membrane. Probably functions as a manganese efflux pump. The protein is Putative manganese efflux pump MntP of Pseudomonas aeruginosa (strain LESB58).